Consider the following 658-residue polypeptide: Integrator complex subunit 9 (658 aa).

A Glycyl lysine isopeptide (Lys-Gly) (interchain with G-Cter in SUMO2) cross-link involves residue Lys-58. The interval 548 to 573 is disordered; that stretch reads DNKHVLQPPPRPTQPTGGKKRKRASD. A Nuclear localization signal motif is present at residues 566–570; the sequence is KKRKR.

This sequence belongs to the metallo-beta-lactamase superfamily. RNA-metabolizing metallo-beta-lactamase-like family. INTS9 subfamily. In terms of assembly, component of the Integrator complex, composed of core subunits INTS1, INTS2, INTS3, INTS4, INTS5, INTS6, INTS7, INTS8, INTS9/RC74, INTS10, INTS11/CPSF3L, INTS12, INTS13, INTS14 and INTS15. The core complex associates with protein phosphatase 2A subunits PPP2CA and PPP2R1A, to form the Integrator-PP2A (INTAC) complex. INTS9 is part of the RNA endonuclease subcomplex, composed of INTS4, INTS9, INTS11 and inositol hexakisphosphate (InsP6). Interacts with WDR73; interaction is required for the assembly of the RNA endonuclease subcomplex in the cytoplasm. Interacts with BRAT1; interaction is required for the assembly of the RNA endonuclease subcomplex. Interacts with ESRRB, ESRRB is not a core component of the Integrator complex and this association is a bridge for the interaction with the multiprotein complex Integrator; attracts the transcriptional machinery.

The protein resides in the nucleus. Its subcellular location is the cytoplasm. Functionally, component of the integrator complex, a multiprotein complex that terminates RNA polymerase II (Pol II) transcription in the promoter-proximal region of genes. The integrator complex provides a quality checkpoint during transcription elongation by driving premature transcription termination of transcripts that are unfavorably configured for transcriptional elongation: the complex terminates transcription by (1) catalyzing dephosphorylation of the C-terminal domain (CTD) of Pol II subunit POLR2A/RPB1 and SUPT5H/SPT5, (2) degrading the exiting nascent RNA transcript via endonuclease activity and (3) promoting the release of Pol II from bound DNA. The integrator complex is also involved in terminating the synthesis of non-coding Pol II transcripts, such as enhancer RNAs (eRNAs), small nuclear RNAs (snRNAs), telomerase RNAs and long non-coding RNAs (lncRNAs). Mediates recruitment of cytoplasmic dynein to the nuclear envelope, probably as component of the integrator complex. The protein is Integrator complex subunit 9 (INTS9) of Bos taurus (Bovine).